The following is a 256-amino-acid chain: Small ribosomal subunit protein eS1 (256 aa).

A2 is modified (N-acetylalanine; partial).

It belongs to the eukaryotic ribosomal protein eS1 family. As to quaternary structure, component of the small ribosomal subunit. Mature ribosomes consist of a small (40S) and a large (60S) subunit. The 40S subunit contains about 33 different proteins and 1 molecule of RNA (18S). The 60S subunit contains about 49 different proteins and 3 molecules of RNA (25S, 5.8S and 5S).

Its subcellular location is the cytoplasm. This is Small ribosomal subunit protein eS1 (rps1) from Botryotinia fuckeliana (strain B05.10) (Noble rot fungus).